The primary structure comprises 440 residues: UDP-N-acetylmuramoylalanine--D-glutamate ligase (440 aa).

Residue 128–134 (GTNGKTT) coordinates ATP.

This sequence belongs to the MurCDEF family.

Its subcellular location is the cytoplasm. It carries out the reaction UDP-N-acetyl-alpha-D-muramoyl-L-alanine + D-glutamate + ATP = UDP-N-acetyl-alpha-D-muramoyl-L-alanyl-D-glutamate + ADP + phosphate + H(+). It participates in cell wall biogenesis; peptidoglycan biosynthesis. Functionally, cell wall formation. Catalyzes the addition of glutamate to the nucleotide precursor UDP-N-acetylmuramoyl-L-alanine (UMA). The polypeptide is UDP-N-acetylmuramoylalanine--D-glutamate ligase (Lawsonia intracellularis (strain PHE/MN1-00)).